The sequence spans 89 residues: Small ribosomal subunit protein uS15 (89 aa).

This sequence belongs to the universal ribosomal protein uS15 family. Part of the 30S ribosomal subunit. Forms a bridge to the 50S subunit in the 70S ribosome, contacting the 23S rRNA.

One of the primary rRNA binding proteins, it binds directly to 16S rRNA where it helps nucleate assembly of the platform of the 30S subunit by binding and bridging several RNA helices of the 16S rRNA. Functionally, forms an intersubunit bridge (bridge B4) with the 23S rRNA of the 50S subunit in the ribosome. The polypeptide is Small ribosomal subunit protein uS15 (Orientia tsutsugamushi (strain Ikeda) (Rickettsia tsutsugamushi)).